The sequence spans 103 residues: Small ribosomal subunit protein uS14c (103 aa).

This sequence belongs to the universal ribosomal protein uS14 family. As to quaternary structure, part of the 30S ribosomal subunit.

It is found in the plastid. It localises to the chloroplast. Functionally, binds 16S rRNA, required for the assembly of 30S particles. The protein is Small ribosomal subunit protein uS14c of Oryza nivara (Indian wild rice).